A 141-amino-acid polypeptide reads, in one-letter code: Large ribosomal subunit protein uL16 (141 aa).

Residues 1–23 are disordered; sequence MLMPKRTKYRKQMKGRNRGKAHR.

It belongs to the universal ribosomal protein uL16 family. In terms of assembly, part of the 50S ribosomal subunit.

In terms of biological role, binds 23S rRNA and is also seen to make contacts with the A and possibly P site tRNAs. The polypeptide is Large ribosomal subunit protein uL16 (Helicobacter pylori (strain J99 / ATCC 700824) (Campylobacter pylori J99)).